Consider the following 114-residue polypeptide: Small ribosomal subunit protein bS6 (114 aa).

The protein belongs to the bacterial ribosomal protein bS6 family.

Its function is as follows. Binds together with bS18 to 16S ribosomal RNA. The chain is Small ribosomal subunit protein bS6 from Thermosynechococcus vestitus (strain NIES-2133 / IAM M-273 / BP-1).